The primary structure comprises 374 residues: Chaperone protein DnaJ (374 aa).

Positions cysteine 5 to glycine 70 constitute a J domain. The CR-type zinc finger occupies glycine 130–glutamine 207. Zn(2+) is bound by residues cysteine 143, cysteine 146, cysteine 159, cysteine 162, cysteine 181, cysteine 184, cysteine 195, and cysteine 198. CXXCXGXG motif repeat units follow at residues cysteine 143–glycine 150, cysteine 159–glycine 166, cysteine 181–glycine 188, and cysteine 195–glycine 202.

It belongs to the DnaJ family. As to quaternary structure, homodimer. Zn(2+) is required as a cofactor.

Its subcellular location is the cytoplasm. In terms of biological role, participates actively in the response to hyperosmotic and heat shock by preventing the aggregation of stress-denatured proteins and by disaggregating proteins, also in an autonomous, DnaK-independent fashion. Unfolded proteins bind initially to DnaJ; upon interaction with the DnaJ-bound protein, DnaK hydrolyzes its bound ATP, resulting in the formation of a stable complex. GrpE releases ADP from DnaK; ATP binding to DnaK triggers the release of the substrate protein, thus completing the reaction cycle. Several rounds of ATP-dependent interactions between DnaJ, DnaK and GrpE are required for fully efficient folding. Also involved, together with DnaK and GrpE, in the DNA replication of plasmids through activation of initiation proteins. The protein is Chaperone protein DnaJ of Francisella philomiragia subsp. philomiragia (strain ATCC 25017 / CCUG 19701 / FSC 153 / O#319-036).